Reading from the N-terminus, the 165-residue chain is Large ribosomal subunit protein eL15 (165 aa).

The segment at 126–147 (TSAGRKSRGLGKGHKFHHTIGG) is disordered. Over residues 130–143 (RKSRGLGKGHKFHH) the composition is skewed to basic residues.

The protein belongs to the eukaryotic ribosomal protein eL15 family. Component of the large ribosomal subunit.

It localises to the cytoplasm. Functionally, component of the large ribosomal subunit. The ribosome is a large ribonucleoprotein complex responsible for the synthesis of proteins in the cell. This Gallus gallus (Chicken) protein is Large ribosomal subunit protein eL15 (RPL15).